A 264-amino-acid polypeptide reads, in one-letter code: Phosphate import ATP-binding protein PstB (264 aa).

Residues 11–250 (LKAEALSVYY…DTTEKIFDSP (240 aa)) enclose the ABC transporter domain. An ATP-binding site is contributed by 43–50 (GPSGCGKS).

Belongs to the ABC transporter superfamily. Phosphate importer (TC 3.A.1.7) family. As to quaternary structure, the complex is composed of two ATP-binding proteins (PstB), two transmembrane proteins (PstC and PstA) and a solute-binding protein (PstS).

Its subcellular location is the cell inner membrane. It catalyses the reaction phosphate(out) + ATP + H2O = ADP + 2 phosphate(in) + H(+). Its function is as follows. Part of the ABC transporter complex PstSACB involved in phosphate import. Responsible for energy coupling to the transport system. The sequence is that of Phosphate import ATP-binding protein PstB from Synechococcus sp. (strain ATCC 27144 / PCC 6301 / SAUG 1402/1) (Anacystis nidulans).